Here is a 175-residue protein sequence, read N- to C-terminus: General stress protein 14 (175 aa).

This sequence belongs to the NAD(P)H dehydrogenase (quinone) family.

In Bacillus subtilis (strain 168), this protein is General stress protein 14 (ywrO).